We begin with the raw amino-acid sequence, 1133 residues long: Myb-binding protein 1A (1133 aa).

Disordered stretches follow at residues 1-62 (MKSK…ENTA), 718-764 (PLSK…DAES), 924-943 (GEEHSEEDQENGKQPASRQA), and 1111-1133 (KKVAKQKKQAAAKPMVVEDEEST). Basic and acidic residues-rich tracts occupy residues 20–35 (KAKEDRKRAKTQKSEA) and 50–60 (EKPAETEEKEN). Composition is skewed to acidic residues over residues 725 to 735 (GEEESDDELDK) and 744 to 762 (DDSEDEDEDEEEDEGEDDA).

Belongs to the MYBBP1A family. In terms of assembly, interacts with nclb.

It localises to the cytoplasm. It is found in the nucleus. The protein localises to the nucleolus. In terms of biological role, has a role in rRNA biogenesis, cell proliferation and tissue growth by contributing to the localization of nclb to the nucleolus. In Drosophila melanogaster (Fruit fly), this protein is Myb-binding protein 1A.